The primary structure comprises 62 residues: Temporin-La (62 aa).

An N-terminal signal peptide occupies residues 1–22 (MFPLKKSLLLLFFLGTINLSFC). A propeptide spanning residues 23 to 47 (EEERDVDQDERRDDPGERNVQVEKR) is cleaved from the precursor. A Leucine amide modification is found at Leu-60.

It belongs to the frog skin active peptide (FSAP) family. Temporin subfamily. In terms of tissue distribution, expressed by the skin glands.

It is found in the secreted. Its subcellular location is the target cell membrane. Functionally, antimicrobial peptide with amphipathic alpha-helical structure that acts against both Gram-positive and Gram-negative bacteria and the fungus Candida albicans. Is active against S.aureus ATCC 25923 (MIC=2.5 ug/ml), S.suis 2 CVCC 606 (MIC=15.6 ug/ml), Salmonella ATCC 20020 (MIC=15.6 ug/ml), P.aeruginosa ATCC 227853 (MIC=60 ug/ml), and C.albicans ATCC10231 (MIC=31.25 ug/ml). Is not active against B.subtilis ADB403, E.coli ATCC 25922, and K.pneumoniae ATCC 700603. Also shows a strong antitumor activity, but no hemolytic activity. This chain is Temporin-La, found in Aquarana catesbeiana (American bullfrog).